A 699-amino-acid chain; its full sequence is Elongation factor G (699 aa).

In terms of domain architecture, tr-type G spans 8–283 (EHIRNIGICA…AIVDFLPSPI (276 aa)). GTP is bound by residues 17–24 (AHIDAGKT), 81–85 (DTPGH), and 135–138 (NKMD).

Belongs to the TRAFAC class translation factor GTPase superfamily. Classic translation factor GTPase family. EF-G/EF-2 subfamily.

Its subcellular location is the cytoplasm. In terms of biological role, catalyzes the GTP-dependent ribosomal translocation step during translation elongation. During this step, the ribosome changes from the pre-translocational (PRE) to the post-translocational (POST) state as the newly formed A-site-bound peptidyl-tRNA and P-site-bound deacylated tRNA move to the P and E sites, respectively. Catalyzes the coordinated movement of the two tRNA molecules, the mRNA and conformational changes in the ribosome. The chain is Elongation factor G from Rickettsia typhi (strain ATCC VR-144 / Wilmington).